An 882-amino-acid chain; its full sequence is Alanine--tRNA ligase (882 aa).

Residues His-570, His-574, Cys-672, and His-676 each contribute to the Zn(2+) site.

It belongs to the class-II aminoacyl-tRNA synthetase family. It depends on Zn(2+) as a cofactor.

It is found in the cytoplasm. It carries out the reaction tRNA(Ala) + L-alanine + ATP = L-alanyl-tRNA(Ala) + AMP + diphosphate. Catalyzes the attachment of alanine to tRNA(Ala) in a two-step reaction: alanine is first activated by ATP to form Ala-AMP and then transferred to the acceptor end of tRNA(Ala). Also edits incorrectly charged Ser-tRNA(Ala) and Gly-tRNA(Ala) via its editing domain. This is Alanine--tRNA ligase from Xanthomonas campestris pv. campestris (strain 8004).